The chain runs to 240 residues: Protein FAM246C (240 aa).

Disordered stretches follow at residues 1–117 and 161–240; these read MAEP…WRSA and LPAA…TRAA. Basic and acidic residues-rich tracts occupy residues 19–31 and 60–74; these read EVLRRGTGRRRDP and AASRSEVPRLLKLVE. The segment covering 165–175 has biased composition (pro residues); that stretch reads SPAPSPAPRPA. Low complexity predominate over residues 176–187; the sequence is ARPCRGRSAPLA.

It belongs to the FAM246 family.

This Homo sapiens (Human) protein is Protein FAM246C.